Consider the following 204-residue polypeptide: Phosphopantothenoylcysteine decarboxylase (204 aa).

FMN contacts are provided by residues Phe-59 and 104-107 (DANT). Asn-140 lines the substrate pocket. Cys-173 (proton donor) is an active-site residue.

The protein belongs to the HFCD (homooligomeric flavin containing Cys decarboxylase) superfamily. As to quaternary structure, homotrimer. FMN is required as a cofactor.

It carries out the reaction N-[(R)-4-phosphopantothenoyl]-L-cysteine + H(+) = (R)-4'-phosphopantetheine + CO2. It participates in cofactor biosynthesis; coenzyme A biosynthesis; CoA from (R)-pantothenate: step 3/5. Its function is as follows. Catalyzes the decarboxylation of the cysteine moiety of 4-phosphopantothenoylcysteine to form 4'-phosphopantotheine and this reaction forms part of the biosynthesis of coenzyme A. This Homo sapiens (Human) protein is Phosphopantothenoylcysteine decarboxylase (PPCDC).